Consider the following 254-residue polypeptide: Type III pantothenate kinase (254 aa).

Residue 6–13 participates in ATP binding; that stretch reads DVGNSNIV. Substrate contacts are provided by residues Y100 and 107–110; that span reads GADR. The active-site Proton acceptor is D109. Position 129 (D129) interacts with K(+). An ATP-binding site is contributed by T132. T184 is a binding site for substrate.

It belongs to the type III pantothenate kinase family. In terms of assembly, homodimer. NH4(+) serves as cofactor. It depends on K(+) as a cofactor.

It localises to the cytoplasm. The catalysed reaction is (R)-pantothenate + ATP = (R)-4'-phosphopantothenate + ADP + H(+). The protein operates within cofactor biosynthesis; coenzyme A biosynthesis; CoA from (R)-pantothenate: step 1/5. Its function is as follows. Catalyzes the phosphorylation of pantothenate (Pan), the first step in CoA biosynthesis. This Geobacter sp. (strain M21) protein is Type III pantothenate kinase.